The following is a 478-amino-acid chain: 2-succinylbenzoate--CoA ligase (478 aa).

The protein belongs to the ATP-dependent AMP-binding enzyme family. MenE subfamily.

It catalyses the reaction 2-succinylbenzoate + ATP + CoA = 2-succinylbenzoyl-CoA + AMP + diphosphate. It participates in quinol/quinone metabolism; 1,4-dihydroxy-2-naphthoate biosynthesis; 1,4-dihydroxy-2-naphthoate from chorismate: step 5/7. It functions in the pathway quinol/quinone metabolism; menaquinone biosynthesis. Converts 2-succinylbenzoate (OSB) to 2-succinylbenzoyl-CoA (OSB-CoA). The chain is 2-succinylbenzoate--CoA ligase from Bacillus licheniformis (strain ATCC 14580 / DSM 13 / JCM 2505 / CCUG 7422 / NBRC 12200 / NCIMB 9375 / NCTC 10341 / NRRL NRS-1264 / Gibson 46).